The following is a 622-amino-acid chain: Interleukin-1 receptor-associated kinase-like 2 (622 aa).

Residues 13–94 (LDDLCRNIDT…RAAQIVLSWK (82 aa)) form the Death domain. The Protein kinase domain maps to 208 to 473 (FDQSHRISEG…LPEACEEAWA (266 aa)). Residues 214 to 222 (ISEGTFADI), Lys-235, and 335 to 338 (KSAN) each bind ATP. Disordered regions lie at residues 511-532 (RVSE…VDNS) and 553-591 (LFTG…ETSW). Polar residues-rich tracts occupy residues 513 to 523 (SEATGSSSNTP) and 561 to 590 (QPST…TETS).

It belongs to the protein kinase superfamily. TKL Ser/Thr protein kinase family. Pelle subfamily. As to quaternary structure, interacts with MYD88. IL-1 stimulation leads to the formation of a signaling complex which dissociates from the IL-1 receptor following the binding of PELI1. Ubiquitously expressed, with a higher expression observed in brain, spleen and liver. Isoform 1 and isoform 2 are considered agonist and isoform 3 and isoform 4 are considered antagonist.

Its function is as follows. Binds to the IL-1 type I receptor following IL-1 engagement, triggering intracellular signaling cascades leading to transcriptional up-regulation and mRNA stabilization. The polypeptide is Interleukin-1 receptor-associated kinase-like 2 (Irak2) (Mus musculus (Mouse)).